The following is a 461-amino-acid chain: Porin AaxA (461 aa).

The signal sequence occupies residues 1 to 22 (MSFRSILLTALLSLSFTNTMQA).

This sequence belongs to the OprB family.

Its subcellular location is the cell outer membrane. Facilitates L-arginine uptake, as part of the AaxABC system. The arginine uptake by the bacterium in the macrophage may be a virulence factor against the host innate immune response. The polypeptide is Porin AaxA (aaxA) (Chlamydia muridarum (strain MoPn / Nigg)).